A 235-amino-acid polypeptide reads, in one-letter code: Ubiquinone biosynthesis O-methyltransferase (235 aa).

Positions 39, 59, 80, and 124 each coordinate S-adenosyl-L-methionine.

It belongs to the methyltransferase superfamily. UbiG/COQ3 family.

The catalysed reaction is a 3-demethylubiquinol + S-adenosyl-L-methionine = a ubiquinol + S-adenosyl-L-homocysteine + H(+). It carries out the reaction a 3-(all-trans-polyprenyl)benzene-1,2-diol + S-adenosyl-L-methionine = a 2-methoxy-6-(all-trans-polyprenyl)phenol + S-adenosyl-L-homocysteine + H(+). It functions in the pathway cofactor biosynthesis; ubiquinone biosynthesis. Its function is as follows. O-methyltransferase that catalyzes the 2 O-methylation steps in the ubiquinone biosynthetic pathway. In Vibrio vulnificus (strain CMCP6), this protein is Ubiquinone biosynthesis O-methyltransferase.